The primary structure comprises 301 residues: 2-oxo-3-(phosphooxy)propyl 3-oxoalkanoate synthase (301 aa).

It belongs to the AfsA family.

It catalyses the reaction a medium-chain 3-oxoacyl-[ACP] + dihydroxyacetone phosphate = a (4-alkanoyl-5-oxo-2,5-dihydrofuran-3-yl)methyl phosphate + holo-[ACP] + H2O. Involved in the biosynthesis of A factor (2-isocapryloyl-3R-hydroxymethyl-gamma-butyrolactone), a gamma-butyrolactone autoregulator that triggers secondary metabolism and morphogenesis in Streptomyces. Catalyzes beta-ketoacyl transfer from 8-methyl-3-oxononanoyl-acyl carrier protein (ACP) to the hydroxyl group of dihydroxyacetone phosphate (DHAP), thus producing an 8-methyl-3-oxononanoyl-DHAP ester. In Streptomyces griseus, this protein is 2-oxo-3-(phosphooxy)propyl 3-oxoalkanoate synthase.